We begin with the raw amino-acid sequence, 383 residues long: ATP phosphoribosyltransferase regulatory subunit (383 aa).

This sequence belongs to the class-II aminoacyl-tRNA synthetase family. HisZ subfamily. Heteromultimer composed of HisG and HisZ subunits.

The protein resides in the cytoplasm. Its pathway is amino-acid biosynthesis; L-histidine biosynthesis; L-histidine from 5-phospho-alpha-D-ribose 1-diphosphate: step 1/9. Functionally, required for the first step of histidine biosynthesis. May allow the feedback regulation of ATP phosphoribosyltransferase activity by histidine. The polypeptide is ATP phosphoribosyltransferase regulatory subunit (Neisseria meningitidis serogroup C (strain 053442)).